Reading from the N-terminus, the 308-residue chain is Homoserine O-succinyltransferase (308 aa).

The Acyl-thioester intermediate role is filled by Cys142. 2 residues coordinate substrate: Lys163 and Ser192. His235 serves as the catalytic Proton acceptor. Glu237 is a catalytic residue. Residue Arg249 coordinates substrate.

Belongs to the MetA family.

It localises to the cytoplasm. It catalyses the reaction L-homoserine + succinyl-CoA = O-succinyl-L-homoserine + CoA. It participates in amino-acid biosynthesis; L-methionine biosynthesis via de novo pathway; O-succinyl-L-homoserine from L-homoserine: step 1/1. Transfers a succinyl group from succinyl-CoA to L-homoserine, forming succinyl-L-homoserine. The protein is Homoserine O-succinyltransferase of Pseudoalteromonas atlantica (strain T6c / ATCC BAA-1087).